The chain runs to 252 residues: Tabtoxin biosynthesis enzyme (252 aa).

Residues 1–23 (MYQRTATQLARKPASKQGETEMN) are disordered.

May play a role in tabtoxin biosynthesis. The chain is Tabtoxin biosynthesis enzyme (tblA) from Pseudomonas amygdali pv. tabaci (Pseudomonas syringae pv. tabaci).